A 630-amino-acid polypeptide reads, in one-letter code: Internalin B (630 aa).

Positions Met-1–Gly-30 are cleaved as a signal peptide. One can recognise an LRRNT domain in the interval Ala-31–Asn-76. Residues Pro-49, Asp-51, Glu-55, and Asp-59 each coordinate Ca(2+). 7 LRR repeats span residues Leu-75–Leu-97, Pro-98–Asn-121, Gly-123–Leu-141, Lys-142–Leu-163, Pro-164–Lys-187, Asp-189–Leu-207, and Thr-208–Asn-231. Residues Glu-241–Leu-319 are ig-like region. The 90-residue stretch at Glu-241–Asp-330 folds into the LRRCT domain. Residues Lys-320–Thr-392 form a b repeat region region. 3 GW domains span residues Thr-393–Tyr-467, Tyr-472–Lys-550, and Met-553–Lys-630. A GW repeat region, necessary and sufficient for cell surface attachment, interacts with host C1QBP and with heparin region spans residues Leu-399–Lys-630.

This sequence belongs to the internalin family. In terms of assembly, monomer. Interacts via its LRR repeats with the extracellular portion of mammalian host MET; MET can bind HGF, its endogenous ligand, and InlB simultaneously. Probably forms a dimer upon interaction with host MET, which subsequently allows dimerization of the host MET and subsequent host signaling; dimerization probably occurs via the convex surface of InlB. Interacts with host complement component 1 Q subcomponent-binding protein (C1QBP). Interacts in vitro with human intestinal mucin-2 (MUC2) but not with mucin-1. The cofactor is Ca(2+).

The protein resides in the secreted. It is found in the cell surface. Its subcellular location is the cell membrane. Its function is as follows. Mediates the entry of L.monocytogenes into normally non-phagocytic mammalian host cells. Its host receptor is hepatocyte growth factor receptor (HGF receptor, a tyrosine kinase, MET) which is tyrosine-phosphorylated in response to InlB in human, green monkey, mouse and dog cell lines. Downstream adapter proteins GAB1 and CBL are phosphorylated in response to InlB, which also causes cell colony scattering. InlB binding to mammalian cells is saturable and inhibited by EDTA; InlB-coated beads can be taken up by host cells. Complement component 1 Q subcomponent-binding protein (gC1q-R, C1QBP) might act as an InlB receptor, leading to activation of PI3-kinase in green monkey cells. Stimulation of Tyr-phosphorylation by InlB is antagonized by C1QBP, showing that potentiation of MET signaling via the GW domains is not mediated by C1QBP; the exact role of C1QBP remains to be determined. Stimulation of Tyr-phosphorylation of MET by InlB is potentiated by the InlB GW domains and glycosaminoglycans such as heparin; exogenously added InlB, or hepatocyte growth factor (HGF) will also substitute for bacterial InlB, suggesting InlB promotes bacterial invasion by mimicking the hormone HGF. May stimulate phosphatidylinositol 4,5-bisphosphate 3-kinase (PI3-kinase) in green monkey cells, has less effect in humans as PI3-kinase is constitutively and highly expressed in Caco cells. Binds heparin; C1QBP and heparin seem to bind to the GW domains. The protein is Internalin B (inlB) of Listeria monocytogenes serotype 1/2a (strain EGD / Mackaness).